Reading from the N-terminus, the 275-residue chain is Urease accessory protein UreD (275 aa).

Belongs to the UreD family. As to quaternary structure, ureD, UreF and UreG form a complex that acts as a GTP-hydrolysis-dependent molecular chaperone, activating the urease apoprotein by helping to assemble the nickel containing metallocenter of UreC. The UreE protein probably delivers the nickel.

It is found in the cytoplasm. Required for maturation of urease via the functional incorporation of the urease nickel metallocenter. This Cereibacter sphaeroides (strain ATCC 17025 / ATH 2.4.3) (Rhodobacter sphaeroides) protein is Urease accessory protein UreD.